We begin with the raw amino-acid sequence, 609 residues long: MPSTFDSKLFLKTVSSSPGVYRMYDEEGTVIYVGKAKDLKKRLSSYFRVNLPNVKTQALVSHIANIDVTVTHSETDALILENDYIKQYMPRYNVLLRDDKSYPYILLSDHKHPRLAYHRGPKRDKGSYFGPYPNGGAVRESLHLLQKIFPIRQCDDLYYKSRSRPCLQYQIGRCSAPCVNKVSDEEYAVQVKLASLFLKGKDLQVMTELVSKMEASALALEYEQAASYRDQIAALRRVAEQQEVSNTSGDMDVIGAYYASGVACFHLLFIREGKIFGSRSYYPSVPAETELDEVLSAFMIQFYLNSDSQRTVPKEILLSHGFDDLPELERAIQTALEKKVEIKTNVRSERANFLRLAVTNATNAVNTRLSHKNTVEQRFLLLEEALEVSTLIQRMECFDISHTMGESTVASCVVFDREGPNKADYRRYNINGITPGDDYAAMKQAITRRFDKIDKNGKIPDLLFIDGGTGQLRIAQKIVDEKFVDIDKTPMLIGVAKGEGRKPGLETLIYGENEQSFTIPADSGALHLIQHIRDESHRFAITGHRNKRQKTRNTSTLESIAGVGPKRRKALLQYLGGIQEVKGASVAELAKVPGISLEMAQTIHDSLRG.

Residues 16-94 (SSPGVYRMYD…IKQYMPRYNV (79 aa)) form the GIY-YIG domain. The UVR domain maps to 203-238 (LQVMTELVSKMEASALALEYEQAASYRDQIAALRRV).

The protein belongs to the UvrC family. As to quaternary structure, interacts with UvrB in an incision complex.

The protein localises to the cytoplasm. Its function is as follows. The UvrABC repair system catalyzes the recognition and processing of DNA lesions. UvrC both incises the 5' and 3' sides of the lesion. The N-terminal half is responsible for the 3' incision and the C-terminal half is responsible for the 5' incision. This chain is UvrABC system protein C, found in Shewanella sediminis (strain HAW-EB3).